Consider the following 238-residue polypeptide: Tetraspanin-8 (238 aa).

The Cytoplasmic segment spans residues 1–9 (MAGVNVCIK). A helical membrane pass occupies residues 10-33 (CSMFIFNFVFWLCGAIILSVAISI). Topologically, residues 34–57 (RAGKIGQEILAPGDADLNLFIAVN) are extracellular. A helical transmembrane segment spans residues 58-72 (ILIFVGAVIMILGFL). At 73-83 (GCCGAMKENQF) the chain is on the cytoplasmic side. A helical membrane pass occupies residues 84–109 (MMILFFVGLLMILLLQVAAGIVATTR). The Extracellular portion of the chain corresponds to 110–206 (KSKTEQALNK…ASISQMFSKR (97 aa)). The N-linked (GlcNAc...) asparagine glycan is linked to Asn118. The helical transmembrane segment at 207–231 (LFIVLALAFGLAAIEVLGLIFSIVL) threads the bilayer. Topologically, residues 232-238 (YCQMRKK) are cytoplasmic.

It belongs to the tetraspanin (TM4SF) family. Forms homooligomers. Interacts with MEP1B. Interacts with integrin alpha3/ITGA3. Interacts with RICTOR and MTOR. Interacts with ADAM17. Interacts with ECE1.

Its subcellular location is the cell membrane. Functionally, structural component of specialized membrane microdomains known as tetraspanin-enriched microdomains (TERMs), which act as platforms for receptor clustering and signaling. Participates thereby in diverse biological functions such as cell signal transduction, migration and protein trafficking. Promotes ADAM17-mediated TNF-alpha processing through recruitment of ADAM17 to tetraspanin-enriched micro-domains (TEMs). Forms a complex with RICTOR and integrin alpha3/ITGA3 to mediate mTORC2 activation and AKT1 phosphorylation leading to cell migration. Reduces apoptosis and autophagy induced by high glucose levels through forming a complex with mTOR and RICTOR. Contributes to the maintenance of intestinal epithelial barrier and plays a role in the regulation of intestine inflammation by switching interferon gamma receptor 1/IFNGR1 from clathrin-dependent to lipid raft-dependent endocytosis route to limit STAT1 activation magnitude and duration. Acts as a modulator of the endothelin axis by associating with endothelin converting enzyme ECE1 and regulating its activity of conversion of the endothelin-1 precursor to endothelin. This chain is Tetraspanin-8 (TSPAN8), found in Bos taurus (Bovine).